The following is a 267-amino-acid chain: MEVKIKQVEEVKISRYIIKETMEDWYQFVESDVVIVGAGPSGLSAAYYLAKAGLKTLVFERRLSFGGGIGGGAMLFHKLIIEKPADEILREVNVRLKEVEEGVYVVDSAEFMAKLATAAIDAGAKIIHGVTVDDVIFRENPLRVAGVAVEWTATQMASLHVDPIFISAKAVVDATGHDAEVISVAARKIPELGIVIPGEKSAYSERAEELTVINTGKVAEGLYAAGMAVTEVKGLPRMGPIFGAMVLSGKAVAEEITKDLLKSEIRT.

Residues Ser41, 60-61, Gly68, Val132, and 160-162 contribute to the NAD(+) site; these read ER and HVD. Residues Asp162 and His177 each contribute to the Fe cation site. Met227 contributes to the NAD(+) binding site. Glycine is bound at residue Arg237.

The protein belongs to the THI4 family. Homooctamer; tetramer of dimers. Requires Fe(2+) as cofactor.

The enzyme catalyses hydrogen sulfide + glycine + NAD(+) = ADP-5-ethyl-4-methylthiazole-2-carboxylate + nicotinamide + 3 H2O + H(+). It participates in cofactor biosynthesis; thiamine diphosphate biosynthesis. Its function is as follows. Involved in the biosynthesis of the thiazole moiety of thiamine. Catalyzes the conversion of NAD and glycine to adenosine diphosphate 5-(2-hydroxyethyl)-4-methylthiazole-2-carboxylate (ADT), an adenylated thiazole intermediate, using free sulfide as a source of sulfur. This is Thiamine thiazole synthase from Saccharolobus islandicus (strain M.14.25 / Kamchatka #1) (Sulfolobus islandicus).